The chain runs to 341 residues: 2-dehydro-3-deoxy-L-galactonate 5-dehydrogenase (341 aa).

Cysteine 37 contributes to the Zn(2+) binding site. Catalysis depends on charge relay system residues threonine 39 and histidine 42. Residues histidine 60, glutamate 61, cysteine 90, cysteine 93, cysteine 96, and cysteine 104 each coordinate Zn(2+).

The protein belongs to the zinc-containing alcohol dehydrogenase family. Requires Zn(2+) as cofactor.

The enzyme catalyses 2-dehydro-3-deoxy-L-galactonate + NAD(+) = 3-deoxy-D-glycero-2,5-hexodiulosonate + NADH + H(+). Involved in the degradation of 3,6-anhydro-L-galactose, which is the major monomeric sugar of red macroalgae. Catalyzes the third step of the pathway, the NAD(+)-dependent oxidation of 2-dehydro-3-deoxy-L-galactonate (L-KDGal) to 3-deoxy-D-glycero-2,5-hexodiulosonate (L-DDGal). This Pseudoalteromonas atlantica (strain T6c / ATCC BAA-1087) protein is 2-dehydro-3-deoxy-L-galactonate 5-dehydrogenase.